Reading from the N-terminus, the 219-residue chain is Transmembrane emp24 domain-containing protein 10 (219 aa).

An N-terminal signal peptide occupies residues 1–31 (MSGLSGPPARRGPFPLALLLLFLLGPRLVLA). The interval 1–142 (MSGLSGPPAR…KNYEEIAKVE (142 aa)) is required for interaction with STX17. Residues 32–185 (ISFHLPINSR…RDTNESTNTR (154 aa)) are Lumenal-facing. The region spanning 41–193 (RKCLREEIHK…TRVLYFSIFS (153 aa)) is the GOLD domain. The segment at 147–178 (LEVELRRLEDLSESIVNDFAYMKKREEEMRDT) is required for TMED10 and TMED2 cis-Golgi network localization. Dimethylated arginine is present on residues Arg171 and Arg176. An N-linked (GlcNAc...) asparagine glycan is attached at Asn179. A helical transmembrane segment spans residues 186 to 206 (VLYFSIFSMFCLIGLATWQVF). The interval 204–219 (QVFYLRRFFKAKKLIE) is interaction with COPG1. At 207 to 219 (YLRRFFKAKKLIE) the chain is on the cytoplasmic side. The tract at residues 207–219 (YLRRFFKAKKLIE) is interaction with ARF1 and IL1B. The COPII vesicle coat-binding motif lies at 211–212 (FF). The COPI vesicle coat-binding signature appears at 211 to 219 (FFKAKKLIE).

Belongs to the EMP24/GP25L family. Predominantly dimeric and to a lesser extent monomeric in the ER. Monomer and dimer in ERGIC and cis-Golgi network. Forms homooligomer (via GOLD domain); the assembly is promoted by direct binding with leaderless cargos and may form a protein channel that facilitates cargo entry into the ERGIC. Forms heterooligomeric complexes with other members of the p24 family such as TMED2, TMED7 and TMED9. Interacts (via GOLD domain) with TMED2 (via GOLD domain); the complex is required for export of TMED10 from the ER to the cis-Golgi network; the complex is proposed to be involved in cis-Golgi network dynamics and / or biogenesis. Associates with the COPI vesicle coat subunits (coatomer). Tetramerization of the cytoplasmic domain at the Golgi membrane in vitro; the complex is proposed to interact with COPI coatomer and induce budding of the vesicles. Interacts with COPG1; the interaction involves TMED10 homodimer. Interacts with ARF1 (GDP-bound); the interaction probably involves a TMED10 oligomer. Interacts with SEC23A, SEC24B, SEC24C and SEC24D components of the coat protein complex II/COPII, indicative of an association of TMED10 with the COPII vesicle coat. Interacts with CD59. Interacts with MPPE1/PGAP5; the complex might recruit and sort GPI-anchored proteins to the ER-exit site, or the interaction might lead to recycling of PGAP5 between the ER and the Golgi. Interacts with F2LR1/PAR2. Interacts with KDELR2/ERD2; the interaction is disrupted by KDELR2 ligand. Found in a complex composed at least of SURF4, TMED2 and TMED10. Associates with the presenilin-dependent gamma-secretase complex. Interacts with STX17; the interaction is direct. Interacts with IL-1; the interaction is direct. Interacts with RAB21 (active GTP-bound form); the interaction is indirect and regulates TMED10 abundance and localization at the Golgi.

The protein localises to the endoplasmic reticulum membrane. Its subcellular location is the endoplasmic reticulum-Golgi intermediate compartment membrane. It localises to the golgi apparatus membrane. It is found in the golgi apparatus. The protein resides in the cis-Golgi network membrane. The protein localises to the trans-Golgi network membrane. Its subcellular location is the cytoplasmic vesicle. It localises to the secretory vesicle membrane. It is found in the cell membrane. The protein resides in the melanosome. Cargo receptor involved in protein vesicular trafficking and quality control in the endoplasmic reticulum (ER) and Golgi. The p24 protein family is a group of transmembrane proteins that bind coat protein complex I/COPI and coat protein complex II/COPII involved in vesicular trafficking between the membranes. Acts at the lumenal side for incorporation of secretory cargo molecules into transport vesicles and involved in vesicle coat formation at the cytoplasmic side. Mainly functions in the early secretory pathway and cycles between the ER, ER-Golgi intermediate compartment (ERGIC) and Golgi, mediating cargo transport through COPI and COPII-coated vesicles. In COPII vesicle-mediated anterograde transport, involved in the transport of GPI-anchored proteins by acting together with TMED2 as their cargo receptor; the function specifically implies SEC24C and SEC24D of the COPII vesicle coat and lipid raft-like microdomains of the ER. Recognizes GPI anchors structural remodeled in the ER by the GPI inositol-deacylase/PGAP1 and the metallophosphoesterase MPPE1/PGAP5. In COPI vesicle-mediated retrograde transport, involved in the biogenesis of COPI vesicles and vesicle coat recruitment. Involved in trafficking of amyloid beta A4 protein and soluble APP-beta release (independent from the modulation of gamma-secretase activity). Involved in the KDELR2-mediated retrograde transport of the toxin A subunit (CTX-A-K63)together with COPI and the COOH terminus of KDELR2. On Golgi membranes, acts as a primary receptor for ARF1-GDP, a GTP-binding protein involved in COPI-vesicle formation. Increases coatomer-dependent GTPase-activating activity of ARFGAP2 which mediates the hydrolysis of ARF1-bound GTP and therefore modulates protein trafficking from the Golgi apparatus. Involved in the exocytic trafficking of G protein-coupled receptors F2LR1/PAR2 (trypsin and tryspin-like enzyme receptor), OPRM1 (opioid receptor) and P2RY4 (UTD and UDP receptor) from the Golgi to the plasma membrane, thus contributing to receptor resensitization. In addition to its cargo receptor activity, may also act as a protein channel after oligomerization, facilitating the post-translational entry of leaderless cytoplasmic cargo into the ERGIC. Involved in the translocation into ERGIC, the vesicle entry and the secretion of leaderless cargos (lacking the secretion signal sequence), including the mature form of interleukin 1/IL-1 family members, the alpha-crystallin B chain HSPB5, the carbohydrate-binding proteins galectin-1/LGALS1 and galectin-3/LGALS3, the microtubule-associated protein Tau/MAPT, and the annexin A1/ANXA1; the translocation process is dependent on cargo protein unfolding and enhanced by chaperones HSP90AB1 and HSP90B1/GRP9. Could also associates with the presenilin-dependent gamma-secretase complex in order to regulate gamma-cleavages of the amyloid beta A4 protein to yield amyloid-beta 40/Abeta40. The polypeptide is Transmembrane emp24 domain-containing protein 10 (Homo sapiens (Human)).